We begin with the raw amino-acid sequence, 431 residues long: MAKIINVIGREIMDSRGNPTVEAEVHLEGGFIGMAAAPSGASTGSREALELRDGDKSRYLGKGVLTAVANVNGPIRAALIGKDATAQAELDQIMIDLDGTENKDKLGANAILAVSLAAAKAAAAFKGMPLYAHIAELNGTPGQYAMPVPMMNILNGGEHADNNVDIQEFMVQPVGAKNFREALRMGAEIFHTLKKVLHGKGLSTSVGDEGGFAPNLSSNADALAVIKEAVELAGYKLGTDVTLALDCAASEFYKDGKYDLSGEGKVFDSNGFSDFLKSLTEQYPIVSIEDGLDESDWDGWAYQTKIMGDKIQLVGDDLFVTNTKILTRGIENGIANSILIKFNQIGSLTETLAAIRMAKAAGYTAVISHRSGETEDATIADLAVGTAAGQIKTGSLCRSDRVAKYNQLLRIEEQLGEKAPYRGLKEIKGQA.

A (2R)-2-phosphoglycerate-binding site is contributed by Gln167. Glu209 (proton donor) is an active-site residue. 3 residues coordinate Mg(2+): Asp246, Glu289, and Asp316. Residues Lys341, Arg370, Ser371, and Lys392 each contribute to the (2R)-2-phosphoglycerate site. Lys341 serves as the catalytic Proton acceptor.

It belongs to the enolase family. Component of the RNA degradosome, a multiprotein complex involved in RNA processing and mRNA degradation. Mg(2+) serves as cofactor.

The protein resides in the cytoplasm. It localises to the secreted. Its subcellular location is the cell surface. The catalysed reaction is (2R)-2-phosphoglycerate = phosphoenolpyruvate + H2O. The protein operates within carbohydrate degradation; glycolysis; pyruvate from D-glyceraldehyde 3-phosphate: step 4/5. Catalyzes the reversible conversion of 2-phosphoglycerate (2-PG) into phosphoenolpyruvate (PEP). It is essential for the degradation of carbohydrates via glycolysis. In Shewanella sp. (strain MR-4), this protein is Enolase.